The primary structure comprises 689 residues: tRNA 5-methylaminomethyl-2-thiouridine biosynthesis bifunctional protein MnmC (689 aa).

The tract at residues 1-245 (MNQRPIQTAT…KREMLTGTLP (245 aa)) is tRNA (mnm(5)s(2)U34)-methyltransferase. The tract at residues 270-689 (IGGGIVSALT…RSPATQESSR (420 aa)) is FAD-dependent cmnm(5)s(2)U34 oxidoreductase.

The protein in the N-terminal section; belongs to the methyltransferase superfamily. tRNA (mnm(5)s(2)U34)-methyltransferase family. This sequence in the C-terminal section; belongs to the DAO family. FAD serves as cofactor.

It is found in the cytoplasm. It carries out the reaction 5-aminomethyl-2-thiouridine(34) in tRNA + S-adenosyl-L-methionine = 5-methylaminomethyl-2-thiouridine(34) in tRNA + S-adenosyl-L-homocysteine + H(+). Catalyzes the last two steps in the biosynthesis of 5-methylaminomethyl-2-thiouridine (mnm(5)s(2)U) at the wobble position (U34) in tRNA. Catalyzes the FAD-dependent demodification of cmnm(5)s(2)U34 to nm(5)s(2)U34, followed by the transfer of a methyl group from S-adenosyl-L-methionine to nm(5)s(2)U34, to form mnm(5)s(2)U34. The chain is tRNA 5-methylaminomethyl-2-thiouridine biosynthesis bifunctional protein MnmC from Yersinia pseudotuberculosis serotype I (strain IP32953).